Here is a 278-residue protein sequence, read N- to C-terminus: tRNA pseudouridine synthase A (278 aa).

Asp-52 serves as the catalytic Nucleophile. Tyr-110 contributes to the substrate binding site. Residues 259–278 form a disordered region; sequence SKRQNGTTKVEQPSSYVHEE. The segment covering 261–278 has biased composition (polar residues); sequence RQNGTTKVEQPSSYVHEE.

It belongs to the tRNA pseudouridine synthase TruA family. In terms of assembly, homodimer.

The enzyme catalyses uridine(38/39/40) in tRNA = pseudouridine(38/39/40) in tRNA. In terms of biological role, formation of pseudouridine at positions 38, 39 and 40 in the anticodon stem and loop of transfer RNAs. The sequence is that of tRNA pseudouridine synthase A from Chloroflexus aurantiacus (strain ATCC 29366 / DSM 635 / J-10-fl).